Here is a 394-residue protein sequence, read N- to C-terminus: Phosphoglycerate kinase (394 aa).

Substrate contacts are provided by residues 21–23, R36, 59–62, R118, and R151; these read DFN and HLGR. S183 carries the phosphoserine modification. Residues K201 and G292 each contribute to the ATP site. At T299 the chain carries Phosphothreonine. Residues E323 and 350-353 contribute to the ATP site; that span reads GGDS.

It belongs to the phosphoglycerate kinase family. Monomer.

Its subcellular location is the cytoplasm. It carries out the reaction (2R)-3-phosphoglycerate + ATP = (2R)-3-phospho-glyceroyl phosphate + ADP. It functions in the pathway carbohydrate degradation; glycolysis; pyruvate from D-glyceraldehyde 3-phosphate: step 2/5. The chain is Phosphoglycerate kinase from Bacillus thuringiensis (strain Al Hakam).